A 68-amino-acid chain; its full sequence is Adipokinetic prohormone type 1 (68 aa).

The first 20 residues, M1 to A20, serve as a signal peptide directing secretion. Residue Q21 is modified to Pyrrolidone carboxylic acid. G30 carries the glycine amide modification. The propeptide occupies G34 to P68.

Expressed in antennal lobe (AL), corpora cardiaca (CC), corpora allata (CA) and gnathal ganglion (GNG) (at protein level). Expression in CC and CA detected in all animals, expression in GNG in some animals and in AL in few animals (at protein level).

The protein resides in the secreted. Its function is as follows. This hormone, released from cells in the corpora cardiaca, causes release of diglycerides from the fat body and stimulation of muscles to use these diglycerides as an energy source during energy-demanding processes. The sequence is that of Adipokinetic prohormone type 1 from Agrotis ipsilon (Black cutworm moth).